A 272-amino-acid polypeptide reads, in one-letter code: tRNA (guanine-N(7)-)-methyltransferase (272 aa).

Positions M1–R20 are enriched in basic and acidic residues. The segment at M1 to Y43 is disordered. Residues G89, E112–I113, N148–A149, and C168 each bind S-adenosyl-L-methionine. Residue D171 is part of the active site. T246–E248 is a binding site for S-adenosyl-L-methionine.

This sequence belongs to the class I-like SAM-binding methyltransferase superfamily. TrmB family. Forms a complex with TRM82.

It is found in the nucleus. The catalysed reaction is guanosine(46) in tRNA + S-adenosyl-L-methionine = N(7)-methylguanosine(46) in tRNA + S-adenosyl-L-homocysteine. It participates in tRNA modification; N(7)-methylguanine-tRNA biosynthesis. Its function is as follows. Catalyzes the formation of N(7)-methylguanine at position 46 (m7G46) in tRNA. The protein is tRNA (guanine-N(7)-)-methyltransferase of Meyerozyma guilliermondii (strain ATCC 6260 / CBS 566 / DSM 6381 / JCM 1539 / NBRC 10279 / NRRL Y-324) (Yeast).